A 386-amino-acid polypeptide reads, in one-letter code: Formate-dependent phosphoribosylglycinamide formyltransferase (386 aa).

N(1)-(5-phospho-beta-D-ribosyl)glycinamide-binding positions include 15–16 and glutamate 75; that span reads EL. ATP-binding positions include arginine 107, lysine 148, 153–158, 188–191, and glutamate 196; these read SSGKGQ and EQFI. The ATP-grasp domain maps to 112 to 301; the sequence is ALAAQQLNLQ…EFELHLRAIV (190 aa). 2 residues coordinate Mg(2+): glutamate 260 and glutamate 272. Residues aspartate 279, lysine 349, and 356–357 contribute to the N(1)-(5-phospho-beta-D-ribosyl)glycinamide site; that span reads RR.

Belongs to the PurK/PurT family. In terms of assembly, homodimer.

The enzyme catalyses N(1)-(5-phospho-beta-D-ribosyl)glycinamide + formate + ATP = N(2)-formyl-N(1)-(5-phospho-beta-D-ribosyl)glycinamide + ADP + phosphate + H(+). Its pathway is purine metabolism; IMP biosynthesis via de novo pathway; N(2)-formyl-N(1)-(5-phospho-D-ribosyl)glycinamide from N(1)-(5-phospho-D-ribosyl)glycinamide (formate route): step 1/1. Involved in the de novo purine biosynthesis. Catalyzes the transfer of formate to 5-phospho-ribosyl-glycinamide (GAR), producing 5-phospho-ribosyl-N-formylglycinamide (FGAR). Formate is provided by PurU via hydrolysis of 10-formyl-tetrahydrofolate. The chain is Formate-dependent phosphoribosylglycinamide formyltransferase from Francisella tularensis subsp. tularensis (strain SCHU S4 / Schu 4).